Consider the following 312-residue polypeptide: MASFSEEAMDSYMYPAYNPYSYRYMTPKNKGMSWRQKNYLASYGDTGDYYDNYQRAQLKAILSQVNPNLTPRLRKANTRDVGVQVNPRQDASVQCSLGPRTLLRRRPGALRKPQQSPPEQGSPASPTKTVRFPRTIAVYSPVAAGRLAPFQDKGENLSEKTEALRSEGSRGEGGRPEGKQEDGEIKEQTKMDKADQEEVAPDQTRPKFQFLEQKYGYYHCKDCNIRWESAYVWCVQGTNKVYFKQFCRTCQKSYNPYRVEDIMCQSCKQTRCMCPVKLRHVDPKRPHRQDLCGRCKGKRLSCDSTFSFKYII.

Disordered stretches follow at residues 79–133 (RDVG…VRFP) and 150–205 (FQDK…DQTR). 2 stretches are compositionally biased toward polar residues: residues 86–95 (NPRQDASVQC) and 113–128 (PQQS…SPTK). The segment covering 152–196 (DKGENLSEKTEALRSEGSRGEGGRPEGKQEDGEIKEQTKMDKADQ) has biased composition (basic and acidic residues). The segment at 214 to 297 (KYGYYHCKDC…RQDLCGRCKG (84 aa)) adopts a 3CxxC-type zinc-finger fold.

The protein belongs to the ZAR1 family. Ovary.

The protein localises to the cytoplasm. The protein resides in the cytoplasmic ribonucleoprotein granule. Functionally, mRNA-binding protein required for maternal mRNA storage, translation and degradation during oocyte maturation. Probably promotes formation of some phase-separated membraneless compartment that stores maternal mRNAs in oocytes: acts by undergoing liquid-liquid phase separation upon binding to maternal mRNAs. Binds to the 3'-UTR of maternal mRNAs in immature oocytes, inhibiting their translation. The chain is Zygote arrest protein 1.L from Xenopus laevis (African clawed frog).